Reading from the N-terminus, the 361-residue chain is Porphobilinogen deaminase (361 aa).

Residue Ser-2 is modified to N-acetylserine. The residue at position 69 (Ser-69) is a Phosphoserine. Lys-74 bears the N6-acetyllysine mark. The residue at position 147 (Ser-147) is a Phosphoserine. Position 261 is an S-(dipyrrolylmethanemethyl)cysteine (Cys-261).

It belongs to the HMBS family. In terms of assembly, monomer. It depends on dipyrromethane as a cofactor.

It localises to the cytoplasm. The protein localises to the cytosol. The enzyme catalyses 4 porphobilinogen + H2O = hydroxymethylbilane + 4 NH4(+). The protein operates within porphyrin-containing compound metabolism; protoporphyrin-IX biosynthesis; coproporphyrinogen-III from 5-aminolevulinate: step 2/4. As part of the heme biosynthetic pathway, catalyzes the sequential polymerization of four molecules of porphobilinogen to form hydroxymethylbilane, also known as preuroporphyrinogen. Catalysis begins with the assembly of the dipyrromethane cofactor by the apoenzyme from two molecules of porphobilinogen or from preuroporphyrinogen. The covalently linked cofactor acts as a primer, around which the tetrapyrrole product is assembled. In the last step of catalysis, the product, preuroporphyrinogen, is released, leaving the cofactor bound to the holodeaminase intact. This Bos taurus (Bovine) protein is Porphobilinogen deaminase (HMBS).